The sequence spans 572 residues: Phosphoenolpyruvate-protein phosphotransferase (572 aa).

Residue histidine 191 is the Tele-phosphohistidine intermediate of the active site. Arginine 298 and arginine 334 together coordinate phosphoenolpyruvate. The Mg(2+) site is built by glutamate 433 and aspartate 457. Residues asparagine 456–aspartate 457 and arginine 467 contribute to the phosphoenolpyruvate site. Residue cysteine 504 is the Proton donor of the active site.

The protein belongs to the PEP-utilizing enzyme family. In terms of assembly, homodimer. Mg(2+) is required as a cofactor.

It localises to the cytoplasm. It carries out the reaction L-histidyl-[protein] + phosphoenolpyruvate = N(pros)-phospho-L-histidyl-[protein] + pyruvate. Its function is as follows. General (non sugar-specific) component of the phosphoenolpyruvate-dependent sugar phosphotransferase system (sugar PTS). This major carbohydrate active-transport system catalyzes the phosphorylation of incoming sugar substrates concomitantly with their translocation across the cell membrane. Enzyme I transfers the phosphoryl group from phosphoenolpyruvate (PEP) to the phosphoryl carrier protein (HPr). The sequence is that of Phosphoenolpyruvate-protein phosphotransferase (ptsI) from Staphylococcus epidermidis (strain ATCC 35984 / DSM 28319 / BCRC 17069 / CCUG 31568 / BM 3577 / RP62A).